A 1019-amino-acid polypeptide reads, in one-letter code: Collagen alpha-2(VI) chain (1019 aa).

An N-terminal signal peptide occupies residues 1–20; sequence MLQGTCSVLLLWGILGAIQA. A nonhelical region region spans residues 21–256; it reads QQQEVISPDT…YKVSCLEIPG (236 aa). In terms of domain architecture, VWFA 1 spans 46 to 234; it reads HVYFVLDTSE…EIDQDTINRI (189 aa). Asn-140 carries an N-linked (GlcNAc...) asparagine glycan. Residues 257 to 588 form a disordered region; that stretch reads PSGPKGYRGQ…GEPGPPGDPG (332 aa). The tract at residues 257 to 590 is triple-helical region; sequence PSGPKGYRGQ…PGPPGDPGLT (334 aa). The segment covering 287 to 305 has biased composition (low complexity); sequence DPGIEGPIGFPGPKGVPGF. The segment covering 306 to 318 has biased composition (basic and acidic residues); it reads KGEKGEFGADGRK. Asn-327 carries an N-linked (GlcNAc...) asparagine glycan. Basic and acidic residues-rich tracts occupy residues 365 to 377 and 419 to 429; these read ERGDQGGKGDPGR and PKGEPGRRGDP. 5 consecutive short sequence motifs (cell attachment site) follow at residues 366–368, 426–428, 489–491, 498–500, and 539–541; these read RGD. The span at 524–557 shows a compositional bias: basic and acidic residues; the sequence is PGEKGEPGPRGPEGGRGDFGLKGEPGRKGEKGEP. A compositionally biased stretch (pro residues) spans 559 to 569; it reads DPGPPGEPGPR. The interval 591 to 1019 is nonhelical region; the sequence is ECDVMTYVRE…FFDRFIRWIC (429 aa). VWFA domains are found at residues 615–805 and 833–1014; these read DVVF…EDVL and DIVF…FDRF. Asn-630 is a glycosylation site (N-linked (GlcNAc...) asparagine). The residue at position 701 (Thr-701) is a Phosphothreonine. Residue Ser-705 is modified to Phosphoserine. N-linked (GlcNAc...) asparagine glycosylation is found at Asn-785, Asn-897, and Asn-954.

Belongs to the type VI collagen family. As to quaternary structure, trimers composed of three different chains: alpha-1(VI), alpha-2(VI), and alpha-3(VI) or alpha-5(VI) or alpha-6(VI). Interacts with CSPG4. Prolines at the third position of the tripeptide repeating unit (G-X-Y) are hydroxylated in some or all of the chains.

It localises to the secreted. The protein resides in the extracellular space. The protein localises to the extracellular matrix. Its subcellular location is the membrane. Functionally, collagen VI acts as a cell-binding protein. This chain is Collagen alpha-2(VI) chain (COL6A2), found in Homo sapiens (Human).